The chain runs to 330 residues: Autoinducer 2 import system permease protein LsrD (330 aa).

Residues 1–4 are Cytoplasmic-facing; the sequence is MRIR. The chain crosses the membrane as a helical span at residues 5–25; the sequence is YGWELALAALLVIEIVAFGAI. The Periplasmic portion of the chain corresponds to 26-42; that stretch reads NPRMLDLNMLLFSTSDF. Residues 43-63 form a helical membrane-spanning segment; the sequence is ICIGIVALPLTMVIVSGGIDI. Topologically, residues 64-67 are cytoplasmic; that stretch reads SFGS. The next 2 membrane-spanning stretches (helical) occupy residues 68–88 and 89–109; these read TIGL…PMPL and AILL…GLII. Over 110 to 115 the chain is Cytoplasmic; the sequence is YTKVNP. A helical transmembrane segment spans residues 116 to 136; sequence LVITLGTLYLFAGSALLLSGM. The Periplasmic portion of the chain corresponds to 137–159; that stretch reads AGATGYEGIGGFPMAFTDFANLD. A helical membrane pass occupies residues 160–180; sequence VLGLPVPLIIFLICLLVFWLW. The Cytoplasmic segment spans residues 181–209; sequence LHKTHAGRNVFLIGQSPRVALYSAIPVNR. The helical transmembrane segment at 210-230 threads the bilayer; the sequence is TLCALYAMTGLASAVAAVLLV. The Periplasmic portion of the chain corresponds to 231–237; it reads SYFGSAR. Helical transmembrane passes span 238–258 and 259–279; these read SDLG…GGAN and IYGG…VGYL. Topologically, residues 280–285 are periplasmic; sequence QQGLQM. Residues 286–306 form a helical membrane-spanning segment; it reads AGVPNQVSSALSGALLIVVVV. At 307–330 the chain is on the cytoplasmic side; it reads GRSVSLHRQQIKEWLARRANNPLP.

It belongs to the binding-protein-dependent transport system permease family. AraH/RbsC subfamily. The complex is composed of two ATP-binding proteins (LsrA), two transmembrane proteins (LsrC and LsrD) and a solute-binding protein (LsrB).

It localises to the cell inner membrane. Functionally, part of the ABC transporter complex LsrABCD involved in autoinducer 2 (AI-2) import. Probably responsible for the translocation of the substrate across the membrane. The sequence is that of Autoinducer 2 import system permease protein LsrD (lsrD) from Shigella flexneri serotype 5b (strain 8401).